A 278-amino-acid polypeptide reads, in one-letter code: Phosphoenolpyruvate carboxylase kinase 2 (278 aa).

Residues 11–269 form the Protein kinase domain; the sequence is YQLCDEIGRG…AEDALRHSWM (259 aa). ATP contacts are provided by residues 17–25 and Lys-40; that span reads IGRGRFGTI. Catalysis depends on Asp-137, which acts as the Proton acceptor.

It belongs to the protein kinase superfamily. Ser/Thr protein kinase family. In terms of tissue distribution, expressed in flowers and roots, and at lower levels in cauline leaves. Barely detectable in rosette leaves and stems.

It carries out the reaction L-seryl-[protein] + ATP = O-phospho-L-seryl-[protein] + ADP + H(+). It catalyses the reaction L-threonyl-[protein] + ATP = O-phospho-L-threonyl-[protein] + ADP + H(+). In terms of biological role, calcium-independent kinase involved in light-dependent phosphoenolpyruvate carboxylase phosphorylation. In Arabidopsis thaliana (Mouse-ear cress), this protein is Phosphoenolpyruvate carboxylase kinase 2 (PPCK2).